Here is a 276-residue protein sequence, read N- to C-terminus: MKSHVRSFKTYIRDEIIKKGGWVNAHAHADRAFTMTPEKIGIYHSSNLQQKWDLVDEVKRTSSVDDYYARFCQSIELMISQGVTAFGTFVDIDPICEDRAIIAAHKAREVYKHDIILKFANQTLKGVIEPTARKWFDIGAEMVDMIGGLPYRDELDYGRGLEAMDILLDKAKSLGIMCHVHVDQFNNPSEKETEQLCDKTIEHGMEGRVVGIHGISIGSHSKEYRYKLYEKMRKAKMMMIACPMAWIDSNRKEDLMPFHNALTPADEMIPEVSLLP.

A signal peptide spans 1 to 29 (MKSHVRSFKTYIRDEIIKKGGWVNAHAHA).

Belongs to the metallo-dependent hydrolases superfamily.

This is an uncharacterized protein from Haemophilus influenzae (strain ATCC 51907 / DSM 11121 / KW20 / Rd).